A 494-amino-acid polypeptide reads, in one-letter code: Subtilisin-like serine protease Pen ch 18.0101 (494 aa).

The N-terminal stretch at 1-16 is a signal peptide; the sequence is MKGFLSLTLLPLLVAA. The propeptide at 17–136 is removed in mature form; that stretch reads SPVAVNSIHN…IEKDSEVRTM (120 aa). An Inhibitor I9 domain is found at 43–136; that stretch reads SYIVVFKKHV…IEKDSEVRTM (94 aa). The Peptidase S8 domain maps to 146–448; that stretch reads PWGLARISHR…GGSANYTKIL (303 aa). 2 igE-binding regions span residues 180 to 198 and 209 to 231; these read VIDT…RANW and EDGN…GVAK. Catalysis depends on charge relay system residues Asp-182 and His-214. N-linked (GlcNAc...) asparagine glycosylation is found at Asn-244 and Asn-280. The active-site Charge relay system is Ser-376. Asn-443 carries an N-linked (GlcNAc...) asparagine glycan. Residues 454-494 constitute a propeptide, removed in mature form; it reads KAHNAETTVEDRIGIIIDSAEKAFHKELGAIYSEIKDAVSV.

This sequence belongs to the peptidase S8 family.

Its function is as follows. Serine protease. This chain is Subtilisin-like serine protease Pen ch 18.0101, found in Penicillium rubens.